Here is a 298-residue protein sequence, read N- to C-terminus: Inosose dehydratase (298 aa).

It belongs to the IolE/MocC family. It depends on glutathione as a cofactor. Co(2+) serves as cofactor. Requires Mn(2+) as cofactor.

The enzyme catalyses scyllo-inosose = 3D-3,5/4-trihydroxycyclohexane-1,2-dione + H2O. It functions in the pathway polyol metabolism; myo-inositol degradation into acetyl-CoA; acetyl-CoA from myo-inositol: step 2/7. In terms of biological role, catalyzes the dehydration of inosose (2-keto-myo-inositol, 2KMI or 2,4,6/3,5-pentahydroxycyclohexanone) to 3D-(3,5/4)-trihydroxycyclohexane-1,2-dione (D-2,3-diketo-4-deoxy-epi-inositol). In Clostridium tetani (strain Massachusetts / E88), this protein is Inosose dehydratase.